A 622-amino-acid chain; its full sequence is Basic helix-loop-helix ARNT-like protein 2 (622 aa).

Over residues M1 to E10 the composition is skewed to low complexity. Disordered regions lie at residues M1–S29 and P41–E86. A compositionally biased stretch (polar residues) spans P45–V54. A compositionally biased stretch (acidic residues) spans D67 to G76. The segment covering D77–E86 has biased composition (basic and acidic residues). The bHLH domain occupies D92–L145. PAS domains follow at residues K163–P235 and V342–K412. Residues T417–H460 enclose the PAC domain.

In terms of assembly, component of the circadian core oscillator, which includes the CRY proteins, CLOCK, or NPAS2, BMAL1 or BMAL2, CSNK1D and/or CSNK1E, TIMELESS and the PER proteins. Interacts directly with CLOCK to form the BMAL2-CLOCK transactivator. Can form heterodimers or homodimers which interact directly with CLOCK to form the transcription activator. In terms of tissue distribution, expressed in the pineal gland.

The protein resides in the nucleus. Its function is as follows. Transcriptional activator which forms a core component of the circadian clock. The circadian clock, an internal time-keeping system, regulates various physiological processes through the generation of approximately 24 hour circadian rhythms in gene expression, which are translated into rhythms in metabolism and behavior. It is derived from the Latin roots 'circa' (about) and 'diem' (day) and acts as an important regulator of a wide array of physiological functions including metabolism, sleep, body temperature, blood pressure, endocrine, immune, cardiovascular, and renal function. Consists of two major components: the central clock, residing in the suprachiasmatic nucleus (SCN) of the brain, and the peripheral clocks that are present in nearly every tissue and organ system. Both the central and peripheral clocks can be reset by environmental cues, also known as Zeitgebers (German for 'timegivers'). The predominant Zeitgeber for the central clock is light, which is sensed by retina and signals directly to the SCN. The central clock entrains the peripheral clocks through neuronal and hormonal signals, body temperature and feeding-related cues, aligning all clocks with the external light/dark cycle. Circadian rhythms allow an organism to achieve temporal homeostasis with its environment at the molecular level by regulating gene expression to create a peak of protein expression once every 24 hours to control when a particular physiological process is most active with respect to the solar day. Transcription and translation of core clock components (CLOCK, NPAS2, BMAL1, BMAL2, PER1, PER2, PER3, CRY1 and CRY2) plays a critical role in rhythm generation, whereas delays imposed by post-translational modifications (PTMs) are important for determining the period (tau) of the rhythms (tau refers to the period of a rhythm and is the length, in time, of one complete cycle). A diurnal rhythm is synchronized with the day/night cycle, while the ultradian and infradian rhythms have a period shorter and longer than 24 hours, respectively. Disruptions in the circadian rhythms contribute to the pathology of cardiovascular diseases, cancer, metabolic syndromes and aging. A transcription/translation feedback loop (TTFL) forms the core of the molecular circadian clock mechanism. Transcription factors, CLOCK or NPAS2 and BMAL1 or BMAL2, form the positive limb of the feedback loop, act in the form of a heterodimer and activate the transcription of core clock genes and clock-controlled genes (involved in key metabolic processes), harboring E-box elements (5'-CACGTG-3') within their promoters. The core clock genes: PER1/2/3 and CRY1/2 which are transcriptional repressors form the negative limb of the feedback loop and interact with the CLOCK|NPAS2-BMAL1|BMAL2 heterodimer inhibiting its activity and thereby negatively regulating their own expression. This heterodimer also activates nuclear receptors NR1D1/2 and RORA/B/G, which form a second feedback loop and which activate and repress BMAL1 transcription, respectively. The preferred binding motif for the CLOCK-BMAL1 heterodimer is 5'-CACGTGA-3', which contains a flanking adenine nucleotide at the 3-prime end of the canonical 6-nucleotide E-box sequence. CLOCK specifically binds to the half-site 5'-CAC-3', while BMAL1 binds to the half-site 5'-GTGA-3'. This is Basic helix-loop-helix ARNT-like protein 2 (BMAL2) from Gallus gallus (Chicken).